We begin with the raw amino-acid sequence, 394 residues long: Dual-specificity RNA methyltransferase RlmN (394 aa).

Glu115 functions as the Proton acceptor in the catalytic mechanism. Residues 121–360 enclose the Radical SAM core domain; that stretch reads EADRATLCVS…VIVRKTRGDD (240 aa). The cysteines at positions 128 and 365 are disulfide-linked. [4Fe-4S] cluster contacts are provided by Cys135, Cys139, and Cys142. Residues 189–190, Ser221, 243–245, and Asn322 contribute to the S-adenosyl-L-methionine site; these read GE and SLH. The active-site S-methylcysteine intermediate is Cys365.

The protein belongs to the radical SAM superfamily. RlmN family. [4Fe-4S] cluster serves as cofactor.

It is found in the cytoplasm. The catalysed reaction is adenosine(2503) in 23S rRNA + 2 reduced [2Fe-2S]-[ferredoxin] + 2 S-adenosyl-L-methionine = 2-methyladenosine(2503) in 23S rRNA + 5'-deoxyadenosine + L-methionine + 2 oxidized [2Fe-2S]-[ferredoxin] + S-adenosyl-L-homocysteine. It catalyses the reaction adenosine(37) in tRNA + 2 reduced [2Fe-2S]-[ferredoxin] + 2 S-adenosyl-L-methionine = 2-methyladenosine(37) in tRNA + 5'-deoxyadenosine + L-methionine + 2 oxidized [2Fe-2S]-[ferredoxin] + S-adenosyl-L-homocysteine. In terms of biological role, specifically methylates position 2 of adenine 2503 in 23S rRNA and position 2 of adenine 37 in tRNAs. m2A2503 modification seems to play a crucial role in the proofreading step occurring at the peptidyl transferase center and thus would serve to optimize ribosomal fidelity. The sequence is that of Dual-specificity RNA methyltransferase RlmN from Pasteurella multocida (strain Pm70).